The primary structure comprises 238 residues: Sugar fermentation stimulation protein homolog (238 aa).

This sequence belongs to the SfsA family.

This Klebsiella pneumoniae subsp. pneumoniae (strain ATCC 700721 / MGH 78578) protein is Sugar fermentation stimulation protein homolog.